A 184-amino-acid chain; its full sequence is Protein GrpE (184 aa).

The disordered stretch occupies residues 1–26 (MTAPQEPVDSTPESGENAATPGLEDD).

This sequence belongs to the GrpE family. In terms of assembly, homodimer.

The protein resides in the cytoplasm. In terms of biological role, participates actively in the response to hyperosmotic and heat shock by preventing the aggregation of stress-denatured proteins, in association with DnaK and GrpE. It is the nucleotide exchange factor for DnaK and may function as a thermosensor. Unfolded proteins bind initially to DnaJ; upon interaction with the DnaJ-bound protein, DnaK hydrolyzes its bound ATP, resulting in the formation of a stable complex. GrpE releases ADP from DnaK; ATP binding to DnaK triggers the release of the substrate protein, thus completing the reaction cycle. Several rounds of ATP-dependent interactions between DnaJ, DnaK and GrpE are required for fully efficient folding. The chain is Protein GrpE from Bordetella bronchiseptica (strain ATCC BAA-588 / NCTC 13252 / RB50) (Alcaligenes bronchisepticus).